Consider the following 403-residue polypeptide: Serine/threonine transporter SstT (403 aa).

8 consecutive transmembrane segments (helical) span residues 11–31 (GNLV…AFIS), 51–71 (AIAP…KEVG), 81–101 (VMYV…SFIF), 138–158 (ALAN…GIPL), 175–195 (AVSY…FGLV), 213–233 (LLGV…PILV), 285–305 (VAIP…VTVL), and 319–339 (FMTA…ASGV).

This sequence belongs to the dicarboxylate/amino acid:cation symporter (DAACS) (TC 2.A.23) family.

The protein resides in the cell inner membrane. It carries out the reaction L-serine(in) + Na(+)(in) = L-serine(out) + Na(+)(out). The catalysed reaction is L-threonine(in) + Na(+)(in) = L-threonine(out) + Na(+)(out). Involved in the import of serine and threonine into the cell, with the concomitant import of sodium (symport system). This is Serine/threonine transporter SstT from Haemophilus ducreyi (strain 35000HP / ATCC 700724).